The following is a 126-amino-acid chain: Aspartate 1-decarboxylase (126 aa).

Serine 25 functions as the Schiff-base intermediate with substrate; via pyruvic acid in the catalytic mechanism. Serine 25 is modified (pyruvic acid (Ser)). Substrate is bound at residue threonine 57. Tyrosine 58 serves as the catalytic Proton donor. Substrate is bound at residue 73-75 (GAA).

The protein belongs to the PanD family. Heterooctamer of four alpha and four beta subunits. It depends on pyruvate as a cofactor. Post-translationally, is synthesized initially as an inactive proenzyme, which is activated by self-cleavage at a specific serine bond to produce a beta-subunit with a hydroxyl group at its C-terminus and an alpha-subunit with a pyruvoyl group at its N-terminus.

It localises to the cytoplasm. The catalysed reaction is L-aspartate + H(+) = beta-alanine + CO2. The protein operates within cofactor biosynthesis; (R)-pantothenate biosynthesis; beta-alanine from L-aspartate: step 1/1. In terms of biological role, catalyzes the pyruvoyl-dependent decarboxylation of aspartate to produce beta-alanine. This chain is Aspartate 1-decarboxylase, found in Pseudomonas aeruginosa (strain LESB58).